Consider the following 486-residue polypeptide: Glucose-6-phosphate 1-dehydrogenase (486 aa).

NADP(+)-binding positions include 13–20 (GGTGDLAK), Arg-47, 86–87 (DV), and Lys-149. The substrate site is built by His-179, Lys-183, Glu-217, and Asp-236. The Proton acceptor role is filled by His-241. Substrate is bound by residues Lys-339 and Lys-344.

The protein belongs to the glucose-6-phosphate dehydrogenase family. Homodimer.

The enzyme catalyses D-glucose 6-phosphate + NAD(+) = 6-phospho-D-glucono-1,5-lactone + NADH + H(+). It catalyses the reaction D-glucose 6-phosphate + NADP(+) = 6-phospho-D-glucono-1,5-lactone + NADPH + H(+). The protein operates within carbohydrate degradation; pentose phosphate pathway; D-ribulose 5-phosphate from D-glucose 6-phosphate (oxidative stage): step 1/3. Its function is as follows. Catalyzes the oxidation of glucose 6-phosphate to 6-phosphogluconolactone. Can utilize either NADP(+) or NAD(+). The chain is Glucose-6-phosphate 1-dehydrogenase from Leuconostoc mesenteroides.